Consider the following 132-residue polypeptide: Small ribosomal subunit protein uS8 (132 aa).

Belongs to the universal ribosomal protein uS8 family. Part of the 30S ribosomal subunit. Contacts proteins S5 and S12.

In terms of biological role, one of the primary rRNA binding proteins, it binds directly to 16S rRNA central domain where it helps coordinate assembly of the platform of the 30S subunit. The protein is Small ribosomal subunit protein uS8 of Alkaliphilus metalliredigens (strain QYMF).